The following is a 310-amino-acid chain: MSGEFVHASVLAREVVEVLRPAPGKLLLDGTLGGGGHSELLLERGARVIGLDKDPRALAAATARLARWGEAFRAVRADFRDAKNVLSALGLTGVDGTLVDLGVSSPQLDQADRGFSFSRPGPLDMRMGDEGERLEDLLRRIDERELARILREYGEEPFARPIARAVKRAVESDEALDTARLADIVAKAIPRKAWPRRIHPATRTFQALRIAVNDELGALAAWLDGLPATLNVGGRAAAISFHSLEDRMVKERFRALTQACTCPPDLPVCACGARASFAAITRKAVVASEAEVAENPRARSAKLRAVEKIR.

Residues 35 to 37, Asp-52, Phe-79, Asp-100, and Gln-107 each bind S-adenosyl-L-methionine; that span reads GGH.

Belongs to the methyltransferase superfamily. RsmH family.

Its subcellular location is the cytoplasm. It catalyses the reaction cytidine(1402) in 16S rRNA + S-adenosyl-L-methionine = N(4)-methylcytidine(1402) in 16S rRNA + S-adenosyl-L-homocysteine + H(+). Its function is as follows. Specifically methylates the N4 position of cytidine in position 1402 (C1402) of 16S rRNA. The polypeptide is Ribosomal RNA small subunit methyltransferase H (Anaeromyxobacter sp. (strain Fw109-5)).